Here is a 372-residue protein sequence, read N- to C-terminus: Glutamate 5-kinase (372 aa).

Lys-6 lines the ATP pocket. Residues Ser-46, Asp-133, and Asn-145 each coordinate substrate. ATP contacts are provided by residues 165-166 and 207-213; these read TD and TGGMYTK. Residues 272 to 350 form the PUA domain; sequence NGFLFVDEGA…HDIESILGYK (79 aa).

The protein belongs to the glutamate 5-kinase family.

Its subcellular location is the cytoplasm. The catalysed reaction is L-glutamate + ATP = L-glutamyl 5-phosphate + ADP. It functions in the pathway amino-acid biosynthesis; L-proline biosynthesis; L-glutamate 5-semialdehyde from L-glutamate: step 1/2. Catalyzes the transfer of a phosphate group to glutamate to form L-glutamate 5-phosphate. The protein is Glutamate 5-kinase of Caldanaerobacter subterraneus subsp. tengcongensis (strain DSM 15242 / JCM 11007 / NBRC 100824 / MB4) (Thermoanaerobacter tengcongensis).